Here is a 384-residue protein sequence, read N- to C-terminus: Carbamoyl phosphate synthase small chain (384 aa).

The interval 1–192 is CPSase; it reads MIKKIPAILV…LADRNREKIY (192 aa). Residues serine 51, glycine 244, and glycine 246 each contribute to the L-glutamine site. Positions 196-382 constitute a Glutamine amidotransferase type-1 domain; sequence KVIVIDFGVK…IEIMKQFRKE (187 aa). Catalysis depends on cysteine 272, which acts as the Nucleophile. L-glutamine contacts are provided by methionine 273, glutamine 276, asparagine 312, glycine 314, and phenylalanine 315. Catalysis depends on residues histidine 355 and glutamate 357.

It belongs to the CarA family. Composed of two chains; the small (or glutamine) chain promotes the hydrolysis of glutamine to ammonia, which is used by the large (or ammonia) chain to synthesize carbamoyl phosphate. Tetramer of heterodimers (alpha,beta)4.

It localises to the plastid. The protein resides in the chloroplast. The enzyme catalyses hydrogencarbonate + L-glutamine + 2 ATP + H2O = carbamoyl phosphate + L-glutamate + 2 ADP + phosphate + 2 H(+). It carries out the reaction L-glutamine + H2O = L-glutamate + NH4(+). The protein operates within amino-acid biosynthesis; L-arginine biosynthesis; carbamoyl phosphate from bicarbonate: step 1/1. It functions in the pathway pyrimidine metabolism; UMP biosynthesis via de novo pathway; (S)-dihydroorotate from bicarbonate: step 1/3. Its function is as follows. Small subunit of the glutamine-dependent carbamoyl phosphate synthetase (CPSase). CPSase catalyzes the formation of carbamoyl phosphate from the ammonia moiety of glutamine, carbonate, and phosphate donated by ATP, constituting the first step of 2 biosynthetic pathways, one leading to arginine and/or urea and the other to pyrimidine nucleotides. The small subunit (glutamine amidotransferase) binds and cleaves glutamine to supply the large subunit with the substrate ammonia. The protein is Carbamoyl phosphate synthase small chain of Porphyra purpurea (Red seaweed).